The primary structure comprises 235 residues: MAREECKALLDGLNKTTACYHHLVLTVGGSADSQNLRQELQKTRQKAQELAVSTCARLTAVLRDRGLAADERAEFERLWVAFSGCLDLLEADMRRALELGAAFPLHAPRRPLVRTGVAGASSGVAARALSTRSLRLEAEGDFDVADLRELEREVLQVGEMIDNMEMKVNVPRWTVQARQAAGAELLSTVSAGPSSVVSLQERGGGCDPRKALAAILFGAVLLAAVALAVCVAKLS.

The Cytoplasmic portion of the chain corresponds to 1–210; it reads MAREECKALL…ERGGGCDPRK (210 aa). Coiled coils occupy residues 29–54 and 144–169; these read GSAD…AVST and VADL…MKVN. The tract at residues 153 to 200 is SNARE-like; the sequence is EVLQVGEMIDNMEMKVNVPRWTVQARQAAGAELLSTVSAGPSSVVSLQ. The chain crosses the membrane as a helical; Anchor for type IV membrane protein span at residues 211 to 231; that stretch reads ALAAILFGAVLLAAVALAVCV. Residues 232-235 are Extracellular-facing; that stretch reads AKLS.

The protein belongs to the RGS7BP/RGS9BP family. In terms of assembly, specifically interacts with isoform RGS9-1 of RGS9. Component of the RGS9-1-Gbeta5 complex composed of RGS9-1, Gbeta5 (GNB5) and RGS9BP.

The protein resides in the membrane. In terms of biological role, regulator of G protein-coupled receptor (GPCR) signaling in phototransduction. Participates in the recovery phase of visual transduction via its interaction with RGS9-1 isoform. Acts as a membrane-anchor that mediates the targeting of RGS9-1 to the photoreceptor outer segment, where phototransduction takes place. Enhances the ability of RGS9-1 to stimulate G protein GTPase activity, allowing the visual signal to be terminated on the physiologically time scale. It also controls the proteolytic stability of RGS9-1, probably by protecting it from degradation. The protein is Regulator of G-protein signaling 9-binding protein (RGS9BP) of Homo sapiens (Human).